Consider the following 375-residue polypeptide: Succinyl-diaminopimelate desuccinylase (375 aa).

H66 is a binding site for Zn(2+). D68 is an active-site residue. A Zn(2+)-binding site is contributed by D99. E130 acts as the Proton acceptor in catalysis. The Zn(2+) site is built by E131, E159, and H345.

It belongs to the peptidase M20A family. DapE subfamily. In terms of assembly, homodimer. Zn(2+) serves as cofactor. It depends on Co(2+) as a cofactor.

The catalysed reaction is N-succinyl-(2S,6S)-2,6-diaminopimelate + H2O = (2S,6S)-2,6-diaminopimelate + succinate. It participates in amino-acid biosynthesis; L-lysine biosynthesis via DAP pathway; LL-2,6-diaminopimelate from (S)-tetrahydrodipicolinate (succinylase route): step 3/3. Catalyzes the hydrolysis of N-succinyl-L,L-diaminopimelic acid (SDAP), forming succinate and LL-2,6-diaminopimelate (DAP), an intermediate involved in the bacterial biosynthesis of lysine and meso-diaminopimelic acid, an essential component of bacterial cell walls. The polypeptide is Succinyl-diaminopimelate desuccinylase (Xanthobacter autotrophicus (strain ATCC BAA-1158 / Py2)).